Here is a 503-residue protein sequence, read N- to C-terminus: MSGTPRTMPPLMMDWAEQPNGRAKPRGMVISRVPYLPWYLLGAVRVGGVSNARPNSRPYSAEQADFGRISQTALCRYRSMPVRNPTPYGVGTQVWRAVVLHHLPLTAAMAAAPFISLLQGDQFLADTPIPGSAVIPNSGNLFPKWADKLSPTAVETWLFDAMAEDGSAAFTVSFFRDGSQAPASFRAAINAAWSDGTVWSQHLVVPVSVVTSDGPDVGHGHVAGVWRTEEPQSNDTTRTTASFDVAADLSTTTVVFDAPGRITGSLTHRSLGYPTLPQSDREAEVAPGAYWFRPIAMANATVDLTFHIDDPTNPDKKTEKRMVLGPEQGAFGGMDRSWLPMVWGKEATDALFVRAQAGPYVMAVMRLVSKPHKYYQNTVNAALYRDGKIVSNALRSLPPDRRDTAATADAVRTEKLYDGDGLVAKYRDKNVGYRLEFRSAGPEREKWSFDLRHHQAWWAKPTSRPGPDGTGNSGFVVEVTGGLVGSEESVHGWGMTGEVELSD.

Belongs to the Diels-Alderase family.

The catalysed reaction is (2S)-3-[(2S)-3,5-dioxo-4-[(2E,4R,6R,8E,10E,12E)-4,6,12-trimethyltetradeca-2,8,10,12-tetraenoyl]pyrrolidin-2-yl]-2-hydroxy-2-methylpropanoate = sch 210972. Its pathway is secondary metabolite biosynthesis. Its function is as follows. Diels-Alderase; part of the gene cluster that mediates the biosynthesis of the tetramic acid Sch210972, a potential anti-HIV fungal natural product that contains a decalin core. The PKS module of cghG together with the enoylreductase cghC catalyze the formation of the polyketide unit which is then conjugated to 4-hydroxyl-4-methyl glutamate (HMG) by the condensation domain of the cghG NRPS module. One unique structural feature of Sch210972 is the tetramic acid motif proposed to be derived from the non-proteinogenic amino acid HMG, by a Dieckmann-type condensation catalyzed by the reductase domain of cghG. The aldolase cghB catalyzes the aldol condensation of 2 molecules of pyruvic acid to yield the intermediate 4-hydroxyl-4-methyl-2-oxoglutarate (HMOG), which can then be stereoselectively transaminated by an unidentified enzyme to form HMG. The Diels-Alderase cghA then uses the Dieckmann product released by cghG as substrate and catalyzes the Diels-Alder cycloaddition to form the decalin ring of Sch210972. CghA also suppresses the nonenzymatic formation of the alternative stereoisomer. In Chaetomium globosum (strain ATCC 6205 / CBS 148.51 / DSM 1962 / NBRC 6347 / NRRL 1970) (Soil fungus), this protein is Diels-Alderase cghA.